Consider the following 193-residue polypeptide: Naphthalene 1,2-dioxygenase system, small oxygenase component (193 aa).

The protein belongs to the bacterial ring-hydroxylating dioxygenase beta subunit family. In terms of assembly, the naphthalene dioxygenase (NDO) multicomponent enzyme system is composed of an electron transfer component and a dioxygenase component (iron sulfur protein (ISP)). The electron transfer component is composed of a ferredoxin reductase (NdoR) and a ferredoxin (NdoA), and the dioxygenase component is formed of a heterohexamer (trimer of heterodimers) of three large alpha subunits (NdoB) and three small beta subunits (NdoC).

It functions in the pathway aromatic compound metabolism; naphthalene degradation. Functionally, component of the naphthalene dioxygenase (NDO) multicomponent enzyme system which catalyzes the incorporation of both atoms of molecular oxygen into naphthalene to form cis-(1R,2S)-dihydroxy-1,2-dihydronaphthalene. The beta subunit seems to have a structural role in the holoenzyme. The polypeptide is Naphthalene 1,2-dioxygenase system, small oxygenase component (Pseudomonas aeruginosa).